The following is a 573-amino-acid chain: MDPQGILKAFPKRKKIHADPSSNALAKIPKREAGDARGWLSSLRAHIMPTGIGRARAELFEKQIIQHGGQVCSAQAPGVTHIVVDEGMDYERALRLLRLPQLPPGAQLVKSAWLSLCLQEKKLTDTDGFSLSSPKRSLNEPQPSKSGQDASAPGTQGVLPRTTLSLSPPCTRAVSPPPKAEKPPKTQTQLSSEDEASDGEGPQVSSADLQALISGHYPTPPGEDGGPDPAPEALGKWVCAQPSSQKATNYNLHITEKLEVLAKAYNVQGDKWRALGYAKAINALKSFHKPVSSYQEACSIPGVGRRMAEKVMEILESGHLRKLDHISDSVPVLELFSNIWGAGTKTAQMWYHQGFRSLEDIRGLASLTAQQAIGLKHYDDFLDRMPREEAAEIEQMVRVSAQAFNPGLLCVACGSFRRGKVTCGDVDVLITHPDGRSHQGIFSPLLDSLRQQGFLTDDLVSQEENGQQQKYLGVCRLPGAGQRHRRLDIIVVPYSEFACALLYFTGSAHFNRSMRALAKTKGMSLSEHALSAAVVRNSQGVKVGAGQVLPTPTEKDVFKLLGLPYREPAERDW.

In terms of domain architecture, BRCT spans 35–131 (DARGWLSSLR…KLTDTDGFSL (97 aa)). A disordered region spans residues 126–235 (TDGFSLSSPK…GPDPAPEALG (110 aa)). Polar residues predominate over residues 127-149 (DGFSLSSPKRSLNEPQPSKSGQD). The segment at 263–277 (KAYNVQGDKWRALGY) is DNA-binding. Catalysis depends on K310, which acts as the Schiff-base intermediate with DNA. Residues 343-346 (GTKT) form a DNA-binding region. DCTP is bound by residues R384, 415–418 (SFRR), and 424–427 (GDVD). The interval 418-427 (RGKVTCGDVD) is involved in primer binding. Positions 425, 427, and 488 each coordinate Mn(2+). Positions 464–503 (ENGQQQKYLGVCRLPGAGQRHRRLDIIVVPYSEFACALLY) are DNA-binding. Residue N511 participates in dCTP binding.

The protein belongs to the DNA polymerase type-X family. Interacts with PCNA. Interacts with PAXX; promoting POLL recruitment to double-strand breaks (DSBs) and stimulation of the end-filling activity of POLL. Interacts with XRCC4; promoting POLL recruitment to double-strand breaks (DSBs) and stimulation of the end-filling activity of POLL. Interacts with NHEJ1/XLF; promoting POLL recruitment to double-strand breaks (DSBs) and stimulation of the end-filling activity of POLL. Mn(2+) serves as cofactor.

The protein resides in the nucleus. It catalyses the reaction DNA(n) + a 2'-deoxyribonucleoside 5'-triphosphate = DNA(n+1) + diphosphate. Functionally, DNA polymerase that functions in several pathways of DNA repair. Involved in base excision repair (BER) responsible for repair of lesions that give rise to abasic (AP) sites in DNA. Also contributes to DNA double-strand break repair by non-homologous end joining and homologous recombination. Has both template-dependent and template-independent (terminal transferase) DNA polymerase activities. Also has a 5'-deoxyribose-5-phosphate lyase (dRP lyase) activity. This Rattus norvegicus (Rat) protein is DNA polymerase lambda.